We begin with the raw amino-acid sequence, 138 residues long: Large ribosomal subunit protein uL16 (138 aa).

This sequence belongs to the universal ribosomal protein uL16 family. Part of the 50S ribosomal subunit.

In terms of biological role, binds 23S rRNA and is also seen to make contacts with the A and possibly P site tRNAs. The chain is Large ribosomal subunit protein uL16 from Chlamydia muridarum (strain MoPn / Nigg).